The primary structure comprises 180 residues: Large ribosomal subunit protein uL5 (180 aa).

Belongs to the universal ribosomal protein uL5 family. Forms a bridge to the 30S subunit in the 70S ribosome. Part of the 50S ribosomal subunit; part of the 5S rRNA/L5/L18/L25 (CTC) subcomplex. Is known to contact the 5S rRNA, 23S rRNA and the P site tRNA.

Its function is as follows. This is one of the proteins that bind and probably mediate the attachment of the 5S RNA into the large ribosomal subunit, where it forms part of the central protuberance. In the 70S ribosome it contacts protein S13 of the 30S subunit (bridge B1b), connecting the 2 subunits; this bridge is implicated in subunit movement. Contacts the P site tRNA; the 5S rRNA and some of its associated proteins might help stabilize positioning of ribosome-bound tRNAs. The sequence is that of Large ribosomal subunit protein uL5 (rplE) from Deinococcus radiodurans (strain ATCC 13939 / DSM 20539 / JCM 16871 / CCUG 27074 / LMG 4051 / NBRC 15346 / NCIMB 9279 / VKM B-1422 / R1).